A 1476-amino-acid chain; its full sequence is Cystic fibrosis transmembrane conductance regulator (1476 aa).

Residues 1 to 77 (MQKSPLEKAS…QLIHALRRCF (77 aa)) lie on the Cytoplasmic side of the membrane. The helical transmembrane segment at 78 to 98 (FWRFLFYGILLYLGEVTKAVQ) threads the bilayer. In terms of domain architecture, ABC transmembrane type-1 1 spans 81-365 (FLFYGILLYL…TAVQIWYDSF (285 aa)). Over 99–122 (PVLLGRIIASYDPENKVERSIAIY) the chain is Extracellular. The helical transmembrane segment at 123–146 (LGIGLCLLFIVRTLLLHPAIFGLH) threads the bilayer. Over 147–195 (RIGMQMRTAMFSLIYKKTLKLSSRVLDKISIGQLVSLLSNNLNKFDEGL) the chain is Cytoplasmic. Residues 196–216 (ALAHFIWIAPLQVTLLMGLLW) form a helical membrane-spanning segment. Residues 217–222 (DLLQFS) lie on the Extracellular side of the membrane. Residues 223–243 (AFCGLGLLIILVIFQAILGKM) form a helical membrane-spanning segment. Topologically, residues 244–298 (MVKYRDQRAAKINERLVITSEIIDNIYSVKAYCWESAMEKMIENLREVELKMTRK) are cytoplasmic. Residues 299 to 319 (AAYMRFFTSSAFFFSGFFVVF) traverse the membrane as a helical segment. At 320–339 (LSVLPYTVINGIVLRKIFTT) the chain is on the extracellular side. A helical membrane pass occupies residues 340-358 (ISFCIVLRMSVTRQFPTAV). Residues 359 to 853 (QIWYDSFGMI…YLRYFTLHKG (495 aa)) lie on the Cytoplasmic side of the membrane. ATP is bound by residues Trp401, 458 to 465 (GSTGSGKT), and Gln493. Residues 423–646 (SDENNVSFSH…RPDFSSKLMG (224 aa)) enclose the ABC transporter 1 domain. The S-palmitoyl cysteine moiety is linked to residue Cys524. Residues Ser549 and Ser660 each carry the phosphoserine modification. The segment at 654–826 (TEERRSSILT…EEINEEDLKE (173 aa)) is disordered R region. Position 670 is a phosphoserine; by PKA (Ser670). Residues Ser684, Ser698, and Ser710 each carry the phosphoserine modification. Residue Thr715 is modified to Phosphothreonine. Ser732, Ser763, Ser785, Ser790, and Ser808 each carry phosphoserine. Residues 854–874 (LLLVLIWCVLVFLVEVAASLF) traverse the membrane as a helical segment. The ABC transmembrane type-1 2 domain maps to 854–1153 (LLLVLIWCVL…SSIDTDSLMR (300 aa)). Topologically, residues 875-913 (VLWLLKNNPVNSGNNGTKISNSSYVVIITSTSFYYIFYI) are extracellular. Residues Asn889 and Asn895 are each glycosylated (N-linked (GlcNAc...) asparagine). Residues 914 to 934 (YVGVADTLLALSLFRGLPLVH) form a discontinuously helical membrane-spanning segment. Topologically, residues 935–985 (TLITASKILHRKMLHSILHAPMSTISKLKAGGILNRFSKDIAILDDFLPLT) are cytoplasmic. Residues 986-1006 (IFDFIQLVFIVIGAIIVVSAL) form a helical membrane-spanning segment. Residues 1007 to 1008 (QP) lie on the Extracellular side of the membrane. Residues 1009–1029 (YIFLATVPGLVVFILLRAYFL) form a helical membrane-spanning segment. The Cytoplasmic portion of the chain corresponds to 1030 to 1090 (HTAQQLKQLE…TANWFMYLAT (61 aa)). Residues 1091–1111 (LRWFQMRIDMIFVLFFIVVTF) traverse the membrane as a helical segment. Over 1112–1125 (ISILTTGEGEGTAG) the chain is Extracellular. Residues 1126-1146 (IILTLAMNIMSTLQWAVNSSI) traverse the membrane as a helical segment. Over 1147–1476 (DTDSLMRSVS…TEEEVQETRL (330 aa)) the chain is Cytoplasmic. The ABC transporter 2 domain maps to 1208–1439 (VKDLTVKYMD…KSIFQQAISS (232 aa)). ATP contacts are provided by residues Tyr1215 and 1240 to 1247 (GRTGSGKS). The tract at residues 1382-1476 (RVLKQAFAGC…TEEEVQETRL (95 aa)) is interaction with GORASP2. Cys1391 carries S-palmitoyl cysteine lipidation. A phosphoserine mark is found at Ser1440 and Ser1452. The disordered stretch occupies residues 1446–1476 (FQGRHSSKHKPRTQITALKEETEEEVQETRL). The segment covering 1466-1476 (ETEEEVQETRL) has biased composition (acidic residues). The PDZ-binding signature appears at 1474 to 1476 (TRL).

Belongs to the ABC transporter superfamily. ABCC family. CFTR transporter (TC 3.A.1.202) subfamily. In terms of assembly, monomer; does not require oligomerization for channel activity. May form oligomers in the membrane. Interacts with SLC26A3, SLC26A6 and NHERF1. Interacts with SHANK2. Interacts with MYO6. Interacts (via C-terminus) with GOPC (via PDZ domain); this promotes CFTR internalization and thereby decreases channel activity. Interacts with SLC4A7 through NHERF1. Found in a complex with MYO5B and RAB11A. Interacts with ANO1. Interacts with SLC26A8. Interacts with AHCYL1; the interaction increases CFTR activity. Interacts with CSE1L. The core-glycosylated form interacts with GORASP2 (via PDZ GRASP-type 1 domain) in respone to ER stress. Interacts with MARCHF2; the interaction leads to CFTR ubiqtuitination and degradation. Interacts with ADGRG2. In terms of processing, N-glycosylated. Post-translationally, phosphorylated; cAMP treatment promotes phosphorylation and activates the channel. Dephosphorylation decreases the ATPase activity (in vitro). Phosphorylation at PKA sites activates the channel. Phosphorylation at PKC sites enhances the response to phosphorylation by PKA. Phosphorylated by AMPK; this inhibits channel activity. Ubiquitinated, leading to its degradation in the lysosome. Deubiquitination by USP10 in early endosomes enhances its endocytic recycling to the cell membrane. Ubiquitinated by RNF185 during ER stress. Ubiquitinated by MARCHF2. In terms of tissue distribution, expressed in the epididymis (at protein level). In the initial segment of the epididymis, detected on both the luminal and basolateral sides of the ducts where it is expressed in the duct columnar cells as well as in the interstitial smooth muscle cells. Expressed in sperm in the caput. In the cauda, detected along the luminal border but not continuously and is also expressed on the basolateral surface. Within the caudal lumen, detected on sperm. Isoform 1: Expressed in a variety of epithelial tissues including colon, kidney, lung, small intestine, pancreatic duct and testis. Isoform 2: Expressed only in testis. Isoform 3: Expressed only in testis.

It is found in the apical cell membrane. The protein localises to the early endosome membrane. The protein resides in the cell membrane. It localises to the recycling endosome membrane. Its subcellular location is the endoplasmic reticulum membrane. It is found in the nucleus. It catalyses the reaction ATP + H2O + closed Cl(-) channel = ADP + phosphate + open Cl(-) channel.. It carries out the reaction chloride(in) = chloride(out). The enzyme catalyses hydrogencarbonate(in) = hydrogencarbonate(out). The catalysed reaction is ATP + H2O = ADP + phosphate + H(+). Functionally, epithelial ion channel that plays an important role in the regulation of epithelial ion and water transport and fluid homeostasis. Mediates the transport of chloride ions across the cell membrane. Possesses an intrinsic ATPase activity and utilizes ATP to gate its channel; the passive flow of anions through the channel is gated by cycles of ATP binding and hydrolysis by the ATP-binding domains. The ion channel is also permeable to HCO(3)(-); selectivity depends on the extracellular chloride concentration. Exerts its function also by modulating the activity of other ion channels and transporters. Contributes to the regulation of the pH and the ion content of the epithelial fluid layer. Modulates the activity of the epithelial sodium channel (ENaC) complex, in part by regulating the cell surface expression of the ENaC complex. May regulate bicarbonate secretion and salvage in epithelial cells by regulating the transporter SLC4A7. Can inhibit the chloride channel activity of ANO1. Plays a role in the chloride and bicarbonate homeostasis during sperm epididymal maturation and capacitation. The polypeptide is Cystic fibrosis transmembrane conductance regulator (Mus musculus (Mouse)).